The sequence spans 101 residues: Thioredoxin 1 (101 aa).

Residues 2 to 101 (AQTLDDLIRT…MRQEVLKAIG (100 aa)) form the Thioredoxin domain. C25 and C28 are disulfide-bonded.

It belongs to the thioredoxin family.

Its function is as follows. Participates in various redox reactions through the reversible oxidation of its active center dithiol to a disulfide and catalyzes dithiol-disulfide exchange reactions. The sequence is that of Thioredoxin 1 (trx1) from Chlorobaculum tepidum (strain ATCC 49652 / DSM 12025 / NBRC 103806 / TLS) (Chlorobium tepidum).